Reading from the N-terminus, the 561-residue chain is MCGIWALFGSDDCLSVQCLSAMKIAHRGPDAFRFENVNGYTNCCFGFHRLAVVDPLFGMQPIRVRKYPYLWLCYNGEIYNHKALQQRFEFEYQTNVDGEIILHLYDKGGIEKTICMLDGVFAFILLDTANKKVFLGRDTYGVRPLFKALTEDGFLAVCSEAKGLVSLKHSTTPFLKVEPFLPGHYEVLDLKPNGKVASVEMVKYHHCTDEPLHAIYDSVEKLFPGFEIETVKNNLRILFNNAIKKRLMTDRRIGCLLSGGLDSSLVAASLLKQLKEAQVPYALQTFAIGMEDSPDLLAARKVANYIGSEHHEVLFNSEEGIQSLDEVIFSLETYDITTVRASVGMYLISKYIRKNTDSVVIFSGEGSDELTQGYIYFHKAPSPEKAEEESERLLKELYLFDVLRADRTTAAHGLELRVPFLDHRFSSYYLSLPPEMRIPKDGIEKHLLRETFEDSNLLPKEILWRPKEAFSDGITSVKNSWFKILQDFVEHQVDDAMMSEASQKFPFNTPQTKEGYYYRQIFEHHYPGRADWLTHYWMPKWINATDPSARTLTHYKSTAKA.

The active-site For GATase activity is the cysteine 2. One can recognise a Glutamine amidotransferase type-2 domain in the interval 2-191 (CGIWALFGSD…PGHYEVLDLK (190 aa)). Residues 49–53 (RLAVV), 75–77 (NGE), and aspartate 97 contribute to the L-glutamine site. An Asparagine synthetase domain is found at 213–536 (HAIYDSVEKL…PGRADWLTHY (324 aa)). ATP is bound by residues leucine 256, isoleucine 288, and 363 to 364 (SG). Residue lysine 385 is modified to N6-acetyllysine. Threonine 545 is subject to Phosphothreonine. Phosphoserine is present on serine 557.

The catalysed reaction is L-aspartate + L-glutamine + ATP + H2O = L-asparagine + L-glutamate + AMP + diphosphate + H(+). It participates in amino-acid biosynthesis; L-asparagine biosynthesis; L-asparagine from L-aspartate (L-Gln route): step 1/1. The chain is Asparagine synthetase [glutamine-hydrolyzing] (Asns) from Rattus norvegicus (Rat).